Here is a 74-residue protein sequence, read N- to C-terminus: MGSMSWIHWVIVLGIVALLFGGRGKLSSIMGDAAKGIKAFKDGLKDESSSEVADNKAKSALPRTEAEAEELRKS.

A helical transmembrane segment spans residues 1–21; sequence MGSMSWIHWVIVLGIVALLFG. The tract at residues 51-74 is disordered; the sequence is EVADNKAKSALPRTEAEAEELRKS. A compositionally biased stretch (basic and acidic residues) spans 64-74; the sequence is TEAEAEELRKS.

This sequence belongs to the TatA/E family. In terms of assembly, the Tat system comprises two distinct complexes: a TatABC complex, containing multiple copies of TatA, TatB and TatC subunits, and a separate TatA complex, containing only TatA subunits. Substrates initially bind to the TatABC complex, which probably triggers association of the separate TatA complex to form the active translocon.

Its subcellular location is the cell inner membrane. Part of the twin-arginine translocation (Tat) system that transports large folded proteins containing a characteristic twin-arginine motif in their signal peptide across membranes. TatA could form the protein-conducting channel of the Tat system. This Caulobacter vibrioides (strain ATCC 19089 / CIP 103742 / CB 15) (Caulobacter crescentus) protein is Sec-independent protein translocase protein TatA.